A 600-amino-acid polypeptide reads, in one-letter code: NADPH-dependent diflavin oxidoreductase 1 (600 aa).

In terms of domain architecture, Flavodoxin-like spans 6-150; sequence LLILYGSQTG…VVDPWLKDLW (145 aa). FMN contacts are provided by residues 12 to 17, 59 to 62, 97 to 106, and aspartate 132; these read SQTGTA, ATTG, and LGDSSYPKFN. An FAD-binding FR-type domain is found at 210-449; sequence IHPFLAPVLS…WVKKGSMKFP (240 aa). FAD contacts are provided by residues arginine 354, 386–389, and 420–423; these read RAFS and GLCS. NADP(+) is bound by residues threonine 463, 518–519, and 524–528; these read SR and KIYVQ. FAD is bound at residue tryptophan 599.

The protein belongs to the NADPH-dependent diflavin oxidoreductase NDOR1 family. This sequence in the N-terminal section; belongs to the flavodoxin family. It in the C-terminal section; belongs to the flavoprotein pyridine nucleotide cytochrome reductase family. Interacts with ciapin1; as part of the cytosolic iron-sulfur (Fe-S) protein assembly (CIA) machinery. The cofactor is FAD. Requires FMN as cofactor.

It is found in the cytoplasm. Its subcellular location is the perinuclear region. It catalyses the reaction 2 oxidized [2Fe-2S]-[protein] + NADPH = 2 reduced [2Fe-2S]-[protein] + NADP(+) + H(+). Its function is as follows. NADPH-dependent reductase which is a central component of the cytosolic iron-sulfur (Fe-S) protein assembly (CIA) machinery. Transfers electrons from NADPH via its FAD and FMN prosthetic groups to the [2Fe-2S] cluster of ciapin1, another key component of the CIA machinery. In turn, this reduced cluster provides electrons for assembly of cytosolic iron-sulfur cluster proteins. It can also reduce the [2Fe-2S] cluster of cisd1 and activate this protein implicated in Fe/S cluster repair. The polypeptide is NADPH-dependent diflavin oxidoreductase 1 (Xenopus laevis (African clawed frog)).